Reading from the N-terminus, the 479-residue chain is Ribosomal RNA small subunit methyltransferase F (479 aa).

S-adenosyl-L-methionine is bound by residues 125–131 (AAAPGSK), glutamate 149, aspartate 176, and aspartate 194. Cysteine 247 functions as the Nucleophile in the catalytic mechanism.

This sequence belongs to the class I-like SAM-binding methyltransferase superfamily. RsmB/NOP family.

It localises to the cytoplasm. It catalyses the reaction cytidine(1407) in 16S rRNA + S-adenosyl-L-methionine = 5-methylcytidine(1407) in 16S rRNA + S-adenosyl-L-homocysteine + H(+). Its function is as follows. Specifically methylates the cytosine at position 1407 (m5C1407) of 16S rRNA. The sequence is that of Ribosomal RNA small subunit methyltransferase F from Citrobacter koseri (strain ATCC BAA-895 / CDC 4225-83 / SGSC4696).